The chain runs to 111 residues: Universal stress protein B (111 aa).

The next 2 membrane-spanning stretches (helical) occupy residues 1 to 21 (MIST…NMAR) and 90 to 110 (FLLT…MMMW).

The protein belongs to the universal stress protein B family.

Its subcellular location is the cell inner membrane. This Pectobacterium atrosepticum (strain SCRI 1043 / ATCC BAA-672) (Erwinia carotovora subsp. atroseptica) protein is Universal stress protein B.